Consider the following 30-residue polypeptide: Nattererin-1 (30 aa).

Expressed by the skin glands.

It localises to the secreted. Functionally, probably has antibacterial activity. The chain is Nattererin-1 from Physalaemus nattereri (Cuyaba dwarf frog).